The following is a 72-amino-acid chain: uncharacterized protein (72 aa).

The signal sequence occupies residues 1 to 22; that stretch reads MQSNFIFATLLVLLSLLTFTYA. Over 23–28 the chain is Extracellular; that stretch reads SGSSSM. Residues 29–49 form a helical membrane-spanning segment; sequence TSSSMPMFGGAIVAAFAFAIF. The Cytoplasmic portion of the chain corresponds to 50–72; sequence SRLAQNFAPRAIFSLLPYHSVSC.

It is found in the membrane. This is an uncharacterized protein from Dictyostelium discoideum (Social amoeba).